Consider the following 456-residue polypeptide: Glutamate--tRNA ligase 1 (456 aa).

The short motif at P9–N19 is the 'HIGH' region element. The 'KMSKS' region signature appears at G250–R254. Residue K253 participates in ATP binding.

It belongs to the class-I aminoacyl-tRNA synthetase family. Glutamate--tRNA ligase type 1 subfamily. As to quaternary structure, monomer.

It is found in the cytoplasm. It catalyses the reaction tRNA(Glu) + L-glutamate + ATP = L-glutamyl-tRNA(Glu) + AMP + diphosphate. Its function is as follows. Catalyzes the attachment of glutamate to tRNA(Glu) in a two-step reaction: glutamate is first activated by ATP to form Glu-AMP and then transferred to the acceptor end of tRNA(Glu). The chain is Glutamate--tRNA ligase 1 from Chelativorans sp. (strain BNC1).